The chain runs to 149 residues: MDLILLQKVTNLGNLGDKVSVKPGYGRNFLVPQGKAVPATAANVEAFETKRAEYEAKASSILADAQSRATKFEGASVTICAHASTEGKLYGSVGPRDIAEAFTAAGLPLEKSEVILGEGAFRNVGEYDVVLHLHADVETTVKVIVESDA.

The protein belongs to the bacterial ribosomal protein bL9 family.

Functionally, binds to the 23S rRNA. The sequence is that of Large ribosomal subunit protein bL9 from Xanthomonas oryzae pv. oryzae (strain MAFF 311018).